Here is a 278-residue protein sequence, read N- to C-terminus: Sulfur carrier protein FdhD (278 aa).

The Cysteine persulfide intermediate role is filled by Cys121. 260–265 lines the Mo-bis(molybdopterin guanine dinucleotide) pocket; that stretch reads FCKPGR.

It belongs to the FdhD family.

It localises to the cytoplasm. Its function is as follows. Required for formate dehydrogenase (FDH) activity. Acts as a sulfur carrier protein that transfers sulfur from IscS to the molybdenum cofactor prior to its insertion into FDH. The sequence is that of Sulfur carrier protein FdhD from Salmonella newport (strain SL254).